We begin with the raw amino-acid sequence, 105 residues long: UPF0473 protein SAK_2028 (105 aa).

Belongs to the UPF0473 family.

The chain is UPF0473 protein SAK_2028 from Streptococcus agalactiae serotype Ia (strain ATCC 27591 / A909 / CDC SS700).